Reading from the N-terminus, the 112-residue chain is ATP synthase epsilon chain (112 aa).

The protein belongs to the ATPase epsilon chain family. F-type ATPases have 2 components, CF(1) - the catalytic core - and CF(0) - the membrane proton channel. CF(1) has five subunits: alpha(3), beta(3), gamma(1), delta(1), epsilon(1). CF(0) has three main subunits: a, b and c.

It is found in the cell inner membrane. Produces ATP from ADP in the presence of a proton gradient across the membrane. This is ATP synthase epsilon chain from Rickettsia rickettsii (strain Sheila Smith).